The sequence spans 445 residues: Rab GDP dissociation inhibitor beta (445 aa).

Met-1 is subject to N-acetylmethionine. Residue Lys-57 is modified to N6-succinyllysine. Ser-61 carries the phosphoserine modification. An N6-acetyllysine modification is found at Lys-112. The residue at position 130 (Ser-130) is a Phosphoserine. The residue at position 269 (Lys-269) is an N6-acetyllysine. Ser-382 bears the Phosphoserine mark.

Belongs to the Rab GDI family. Interacts with RHOH. Interacts with the GDP-bound inactive forms of RAB3A, RAB3B, RAB3C, RAB5A, RAB5B, RAB5C, RAB8A, RAB8B, RAB10, RAB12, RAB35, and RAB43; binds RAB3D to a lesser extent. Interacts with DZIP1; this interaction negatively regulates the interaction of GDI2 with GDP-bound RAB8A. As to expression, ubiquitous.

Its subcellular location is the cytoplasm. It is found in the membrane. It localises to the golgi apparatus. The protein resides in the trans-Golgi network. In terms of biological role, GDP-dissociation inhibitor preventing the GDP to GTP exchange of most Rab proteins. By keeping these small GTPases in their inactive GDP-bound form regulates intracellular membrane trafficking. Negatively regulates protein transport to the cilium and ciliogenesis through the inhibition of RAB8A. This chain is Rab GDP dissociation inhibitor beta (GDI2), found in Homo sapiens (Human).